We begin with the raw amino-acid sequence, 196 residues long: Molybdenum cofactor guanylyltransferase (196 aa).

GTP-binding positions include 10 to 12 (LAG), Lys23, Asn51, Asp69, and Asp99. Asp99 serves as a coordination point for Mg(2+).

Belongs to the MobA family. Monomer. Mg(2+) serves as cofactor.

It is found in the cytoplasm. It catalyses the reaction Mo-molybdopterin + GTP + H(+) = Mo-molybdopterin guanine dinucleotide + diphosphate. In terms of biological role, transfers a GMP moiety from GTP to Mo-molybdopterin (Mo-MPT) cofactor (Moco or molybdenum cofactor) to form Mo-molybdopterin guanine dinucleotide (Mo-MGD) cofactor. This is Molybdenum cofactor guanylyltransferase from Shewanella amazonensis (strain ATCC BAA-1098 / SB2B).